A 513-amino-acid polypeptide reads, in one-letter code: MVRLFRSGSNPKEIDISQPNSLVHKVHVDLDLNWSSGGETSFEIQEKLGEGSFGSVYRAIHKSSNTSIAIKEFEIFEANDVEPISKEIQILKKCNNPYVVSYFGSIMLKNKYWILMDYCSLSSFNDIMQSIGKTFKEKEISLILQQSLLGLVYLHSKQIIHRDIKSANILLDETGQVKIADFGVSQQIQSTFSKGSIAGTPYWMAPEILNQTDYNNKIDVWSLGIVAIELADGEPPLSEVNPMRAMYMIGRRPPPTFKDPKKWSPEFVSFVDKCLTKDINERWSPSQLLDHPFIKSAKPDALKELTQMAIKLKSKKRKSIGPSVSPKQQPNDNNNNNNNNKPQFLSKLLNNNSNSSNDIGETTSGSVIYKPNVFSGSIDTGSVVIHNTITSNNNDSGSVVLNSNTVINRSKPLPPPPSYESVILNDKLKQQQQQQQQSNQQTTTTTTKQNTIKNKFNTISNTIKCNTILVQDKTLEIIQKTPMKNLDERNQKIVLYSTLGLILVLSVFFKFFK.

The 253-residue stretch at 42–294 (FEIQEKLGEG…PSQLLDHPFI (253 aa)) folds into the Protein kinase domain. ATP is bound by residues 48 to 56 (LGEGSFGSV) and K71. The active-site Proton acceptor is the D163. The interval 313–358 (KSKKRKSIGPSVSPKQQPNDNNNNNNNNKPQFLSKLLNNNSNSSND) is disordered. The segment covering 331–357 (NDNNNNNNNNKPQFLSKLLNNNSNSSN) has biased composition (low complexity). Residues 493–512 (IVLYSTLGLILVLSVFFKFF) form a helical membrane-spanning segment.

The protein belongs to the protein kinase superfamily. STE Ser/Thr protein kinase family. STE20 subfamily. The cofactor is Mg(2+).

The protein resides in the membrane. The catalysed reaction is L-seryl-[protein] + ATP = O-phospho-L-seryl-[protein] + ADP + H(+). The enzyme catalyses L-threonyl-[protein] + ATP = O-phospho-L-threonyl-[protein] + ADP + H(+). This is Serine/threonine-protein kinase pakH (pakH-1) from Dictyostelium discoideum (Social amoeba).